The chain runs to 525 residues: Neutrophil cytosol factor 2 (525 aa).

3 TPR repeats span residues 37–70 (SRIC…DKHS), 71–104 (AVAY…LRGN), and 121–154 (CEVL…KSEP). Position 233 is a phosphothreonine (Thr-233). Residues 240-299 (LEGEAHRVLFGFVPETPEELQVMPGNIVFVLKKGSDNWATVMFNGQKGLVPCNYLEPVEL) form the SH3 1 domain. Residues 304–343 (QSQPQEDTSPESDIPPPPNSSPPGRLQLSPGHKQKEPKEL) are disordered. Ser-324 and Ser-398 each carry phosphoserine. Residues 350–428 (PYMLKVHYKY…YCLTLWCEHT (79 aa)) form the PB1 domain. Residues 437-457 (EPIQRENSDASKQTTEPQPKE) form a disordered region. The SH3 2 domain occupies 456 to 515 (KEGTQVVAIFSYEAAQPEDLEFVEGDVILVLSHVNEEWLEGECKGKVGIFPKAFVEGCAA).

Belongs to the NCF2/NOXA1 family. In terms of assembly, component of the phagocyte NADPH oxidase complex composed of an obligatory core heterodimer formed by the membrane proteins CYBA and CYBB and the cytosolic regulatory subunits NCF1/p47-phox, NCF2/p67-phox, NCF4/p40-phox and the small GTPase RAC1 or RAC2. Part of a cytosolic complex composed at least by NCF1, NCF2 and NCF4. Interacts with NCF4. Interacts (via the C-terminal SH3 domain) with NCF1 (via C-terminus). Interacts with SYTL1 and RAC1. May interact with NOXO1. Interacts with S100A8 and calprotectin (S100A8/9). Interacts with GBP7 (via GB1/RHD3-type G domain). Interacts with CYBB; the interaction is enhanced in the presence of GBP7.

The protein localises to the cytoplasm. NCF2, NCF1, and a membrane bound cytochrome b558 are required for activation of the latent NADPH oxidase (necessary for superoxide production). Functionally, subunit of the phagocyte NADPH oxidase complex that mediates the transfer of electrons from cytosolic NADPH to O2 to produce the superoxide anion (O2(-)). In the activated complex, electrons are first transferred from NADPH to flavin adenine dinucleotide (FAD) and subsequently transferred via two heme molecules to molecular oxygen, producing superoxide through an outer-sphere reaction. Activation of the NADPH oxidase complex is initiated by the assembly of cytosolic subunits of the NADPH oxidase complex with the core NADPH oxidase complex to form a complex at the plasma membrane or phagosomal membrane. This activation process is initiated by phosphorylation dependent binding of the cytosolic NCF1/p47-phox subunit to the C-terminus of CYBA/p22-phox. The protein is Neutrophil cytosol factor 2 of Mus musculus (Mouse).